A 585-amino-acid chain; its full sequence is MKSILSQLKTAVSEALIKAFGEDLKDTDPLVVPASNPKFGDYQSNVALSLTKILKKNPREIAQSIIEALDIADTCENPTIAGPGFINFSLKPSYLATLLKEVQQSDRLAIEPAENPQKVIVDFSSPNIAKEMHVGHLRSTIIGDSIARILEFRGQDVLRLNHVGDWGTQFGMLITYLKEVYPDALTKADALDIGDLVAFYKKAKVRFDEDEAFKEASRNQVVKLQSGDEESQKAWQLLCEQSRREFQKIYDILDIKLTERGESFYNPYLADVLTALDEVGLLEEDAGAQCVFLEGFKNKDGDRLPLIVQKSDGGFNYATTDLAAIRYRIKEDQAKRIIYVTDSGQAGHFAQVFQVAERAGFLPDDVEVVHVPFGLVQGEDGKKLKTRAGDTIKLKDLLDEAVNRSRADLEKRLAEDERQETADFIEKVSQVVGIGAVKYADLSQNRTSNYIFSFDKMLALQGNTAPYMLYAYVRVQGVSRQGGIDLSTLPTDTPIILEEAAELTLAKHLLQLSEVLMSVEQDLMPNRLCEYLYDLSRKFNQFYEACPILKAEGDRRISRLILADTTARTLKLGLSLLGIEVLDRM.

The 'HIGH' region signature appears at 126–136 (PNIAKEMHVGH).

It belongs to the class-I aminoacyl-tRNA synthetase family. As to quaternary structure, monomer.

Its subcellular location is the cytoplasm. The catalysed reaction is tRNA(Arg) + L-arginine + ATP = L-arginyl-tRNA(Arg) + AMP + diphosphate. This chain is Arginine--tRNA ligase, found in Picosynechococcus sp. (strain ATCC 27264 / PCC 7002 / PR-6) (Agmenellum quadruplicatum).